Reading from the N-terminus, the 395-residue chain is Flap endonuclease 1 (395 aa).

Residues 1-108 (MGILGLSKLL…DELETRRQKA (108 aa)) are N-domain. Aspartate 34 contributes to the Mg(2+) binding site. Arginine 74 provides a ligand contact to DNA. The Mg(2+) site is built by aspartate 90, glutamate 162, glutamate 164, aspartate 183, and aspartate 185. Positions 126-257 (MMEKMSKRTV…QRAWEGIQRY (132 aa)) are I-domain. Glutamate 162 contributes to the DNA binding site. DNA is bound by residues glycine 235 and aspartate 237. Aspartate 237 is a Mg(2+) binding site. Positions 340–348 (TQGRLDNFF) are interaction with PCNA.

It belongs to the XPG/RAD2 endonuclease family. FEN1 subfamily. Interacts with PCNA. Three molecules of FEN1 bind to one PCNA trimer with each molecule binding to one PCNA monomer. PCNA stimulates the nuclease activity without altering cleavage specificity. It depends on Mg(2+) as a cofactor. Post-translationally, phosphorylated. Phosphorylation upon DNA damage induces relocalization to the nuclear plasma.

The protein localises to the nucleus. It is found in the nucleolus. It localises to the nucleoplasm. The protein resides in the mitochondrion. In terms of biological role, structure-specific nuclease with 5'-flap endonuclease and 5'-3' exonuclease activities involved in DNA replication and repair. During DNA replication, cleaves the 5'-overhanging flap structure that is generated by displacement synthesis when DNA polymerase encounters the 5'-end of a downstream Okazaki fragment. It enters the flap from the 5'-end and then tracks to cleave the flap base, leaving a nick for ligation. Also involved in the long patch base excision repair (LP-BER) pathway, by cleaving within the apurinic/apyrimidinic (AP) site-terminated flap. Acts as a genome stabilization factor that prevents flaps from equilibrating into structures that lead to duplications and deletions. Also possesses 5'-3' exonuclease activity on nicked or gapped double-stranded DNA, and exhibits RNase H activity. Also involved in replication and repair of rDNA and in repairing mitochondrial DNA. The chain is Flap endonuclease 1 from Leishmania braziliensis.